Here is a 511-residue protein sequence, read N- to C-terminus: Cytochrome P450 705A5 (511 aa).

A helical transmembrane segment spans residues 12 to 30; sequence CFIFLLLCLFSRLSYDLFF. C454 lines the heme pocket.

It belongs to the cytochrome P450 family. Heme serves as cofactor. Expressed primarily in the root epidermis.

The protein resides in the membrane. Functionally, converts thalian-diol to a desaturated thalian-diol. The chain is Cytochrome P450 705A5 (CYP705A5) from Arabidopsis thaliana (Mouse-ear cress).